The following is a 412-amino-acid chain: Putative competence-damage inducible protein (412 aa).

Belongs to the CinA family.

This Clostridium perfringens (strain SM101 / Type A) protein is Putative competence-damage inducible protein.